A 610-amino-acid chain; its full sequence is Dihydroxy-acid dehydratase (610 aa).

Asp-81 contributes to the Mg(2+) binding site. Position 122 (Cys-122) interacts with [2Fe-2S] cluster. Mg(2+) is bound by residues Asp-123 and Lys-124. Lys-124 bears the N6-carboxylysine mark. Residue Cys-196 coordinates [2Fe-2S] cluster. Position 492 (Glu-492) interacts with Mg(2+). Ser-518 serves as the catalytic Proton acceptor.

Belongs to the IlvD/Edd family. In terms of assembly, homodimer. Requires [2Fe-2S] cluster as cofactor. Mg(2+) serves as cofactor.

The catalysed reaction is (2R)-2,3-dihydroxy-3-methylbutanoate = 3-methyl-2-oxobutanoate + H2O. It carries out the reaction (2R,3R)-2,3-dihydroxy-3-methylpentanoate = (S)-3-methyl-2-oxopentanoate + H2O. Its pathway is amino-acid biosynthesis; L-isoleucine biosynthesis; L-isoleucine from 2-oxobutanoate: step 3/4. It participates in amino-acid biosynthesis; L-valine biosynthesis; L-valine from pyruvate: step 3/4. In terms of biological role, functions in the biosynthesis of branched-chain amino acids. Catalyzes the dehydration of (2R,3R)-2,3-dihydroxy-3-methylpentanoate (2,3-dihydroxy-3-methylvalerate) into 2-oxo-3-methylpentanoate (2-oxo-3-methylvalerate) and of (2R)-2,3-dihydroxy-3-methylbutanoate (2,3-dihydroxyisovalerate) into 2-oxo-3-methylbutanoate (2-oxoisovalerate), the penultimate precursor to L-isoleucine and L-valine, respectively. The chain is Dihydroxy-acid dehydratase from Ruegeria pomeroyi (strain ATCC 700808 / DSM 15171 / DSS-3) (Silicibacter pomeroyi).